The following is a 275-amino-acid chain: Taurine transport system permease protein TauC (275 aa).

7 helical membrane passes run 20 to 42 (LSRQVTLSIGTLAVLLTVWWTVA), 87 to 107 (IMLALFAAVLFGIPVGIAMGL), 124 to 144 (PVPPLAYLPLMVIWFGIGETS), 146 to 166 (ILLIYLAIFAPVAMSALAGVK), 186 to 206 (VLWFVILPGALPEILTGLRIG), 209 to 229 (VGWSTLVAAELIAATRGLGFM), and 236 to 256 (FLATDVVLAGIAVIAIIAFLL). The ABC transmembrane type-1 domain maps to 80–264 (LAASLTRIML…LLELGLRALQ (185 aa)).

It belongs to the binding-protein-dependent transport system permease family. CysTW subfamily.

It is found in the cell inner membrane. Functionally, part of a binding-protein-dependent transport system for taurine. Probably responsible for the translocation of the substrate across the membrane. The chain is Taurine transport system permease protein TauC (tauC) from Escherichia coli (strain K12).